Consider the following 64-residue polypeptide: Large ribosomal subunit protein bL35 (64 aa).

It belongs to the bacterial ribosomal protein bL35 family.

This chain is Large ribosomal subunit protein bL35, found in Leifsonia xyli subsp. xyli (strain CTCB07).